A 515-amino-acid chain; its full sequence is 1-pyrroline-5-carboxylate dehydrogenase 2 (515 aa).

Catalysis depends on residues glutamate 286 and cysteine 320.

It belongs to the aldehyde dehydrogenase family. RocA subfamily.

The enzyme catalyses L-glutamate 5-semialdehyde + NAD(+) + H2O = L-glutamate + NADH + 2 H(+). It functions in the pathway amino-acid degradation; L-proline degradation into L-glutamate; L-glutamate from L-proline: step 2/2. This is 1-pyrroline-5-carboxylate dehydrogenase 2 (rocA2) from Halalkalibacterium halodurans (strain ATCC BAA-125 / DSM 18197 / FERM 7344 / JCM 9153 / C-125) (Bacillus halodurans).